Consider the following 397-residue polypeptide: Tyrosine--tRNA ligase (397 aa).

Positions 41–50 (PTAPDLHLGH) match the 'HIGH' region motif. Residues 225–229 (KMSKS) carry the 'KMSKS' region motif. ATP is bound at residue lysine 228. One can recognise an S4 RNA-binding domain in the interval 340–396 (AFLADSGLAGSRGEAKRLIKQGALSLDGEKLDDPNTPLTAGEYVVRLGKKRFLRLIV).

Belongs to the class-I aminoacyl-tRNA synthetase family. TyrS type 2 subfamily. Homodimer.

Its subcellular location is the cytoplasm. It catalyses the reaction tRNA(Tyr) + L-tyrosine + ATP = L-tyrosyl-tRNA(Tyr) + AMP + diphosphate + H(+). In terms of biological role, catalyzes the attachment of tyrosine to tRNA(Tyr) in a two-step reaction: tyrosine is first activated by ATP to form Tyr-AMP and then transferred to the acceptor end of tRNA(Tyr). This chain is Tyrosine--tRNA ligase, found in Oleidesulfovibrio alaskensis (strain ATCC BAA-1058 / DSM 17464 / G20) (Desulfovibrio alaskensis).